A 415-amino-acid polypeptide reads, in one-letter code: MRLPRASSPCGLAWGPLLLGLSGLLVASQPQLVPPYRIENQTCWDQDKEYYEPMHDVCCSRCPPGEFVFAVCSRSQDTVCKTCPHNSYNEHWNHLSTCQLCRPCDIVLGFEEVAPCTSDRKAECRCQPGMSCVYLDNECVHCEEERLVLCQPGTEAEVTDEIMDTDVNCVPCKPGHFQNTSSPRARCQPHTRCEIQGLVEAAPGTSYSDTICKNPPEPGAMLLLAILLSLVLFLLFTTVLACAWMRHPSLCRKLGTLLKRHPEGEESPPCPAPRADPHFPDLAEPLLPMSGDLSPSPAGPPTAPSLEEVVLQQQSPLVQARELEAEPGEHGQVAHGANGIHVTGGSVTVTGNIYIYNGPVLGGTRGPGDPPAPPEPPYPTPEEGAPGPSELSTPYQEDGKAWHLAETETLGCQDL.

Residues 1–30 (MRLPRASSPCGLAWGPLLLGLSGLLVASQP) form the signal peptide. Over 31–223 (QLVPPYRIEN…NPPEPGAMLL (193 aa)) the chain is Extracellular. N-linked (GlcNAc...) asparagine glycosylation occurs at asparagine 40. TNFR-Cys repeat units lie at residues 42-81 (TCWD…TVCK), 82-124 (TCPH…KAEC), 125-170 (RCQP…VNCV), and 171-213 (PCKP…TICK). Intrachain disulfides connect cysteine 43-cysteine 58, cysteine 59-cysteine 72, cysteine 62-cysteine 80, cysteine 83-cysteine 98, cysteine 101-cysteine 116, cysteine 104-cysteine 124, cysteine 126-cysteine 132, cysteine 139-cysteine 150, cysteine 142-cysteine 169, and cysteine 172-cysteine 187. The N-linked (GlcNAc...) asparagine glycan is linked to asparagine 179. Residues 224–244 (LAILLSLVLFLLFTTVLACAW) traverse the membrane as a helical segment. Topologically, residues 245–415 (MRHPSLCRKL…ETETLGCQDL (171 aa)) are cytoplasmic. The interval 261–304 (HPEGEESPPCPAPRADPHFPDLAEPLLPMSGDLSPSPAGPPTAP) is disordered. Serine 315 carries the phosphoserine modification. The tract at residues 361–399 (LGGTRGPGDPPAPPEPPYPTPEEGAPGPSELSTPYQEDG) is disordered. The segment covering 368-380 (GDPPAPPEPPYPT) has biased composition (pro residues).

Self-associates; dimerization and trimerization are promoted by lymphotoxin (LTA(3)). Associates with TRAF3. Associates with TRAF4. Associates with TRAF5.

The protein resides in the membrane. Functionally, receptor for the heterotrimeric lymphotoxin containing LTA and LTB, and for TNFS14/LIGHT. Activates NF-kappa-B signaling upon stimulation with lymphotoxin. Promotes apoptosis via TRAF3 and TRAF5. May play a role in the development of lymphoid organs. Its function is as follows. (Microbial infection) Plays a role in host defense against Zika virus infection. The polypeptide is Tumor necrosis factor receptor superfamily member 3 (Ltbr) (Mus musculus (Mouse)).